The chain runs to 170 residues: Cysteine-rich venom protein VAR4 (170 aa).

Residues 1–22 (MILLKLYLTLAAILCQSRGTTS) form the signal peptide. The region spanning 41–169 (NKHNDLRRTV…PLKYFLVCQY (129 aa)) is the SCP domain. Disulfide bonds link cysteine 77–cysteine 156, cysteine 95–cysteine 170, and cysteine 151–cysteine 167.

It belongs to the CRISP family. Contains 8 disulfide bonds. Expressed by the venom gland.

It is found in the secreted. Functionally, blocks ryanodine receptors, and potassium channels. This chain is Cysteine-rich venom protein VAR4, found in Varanus acanthurus (Ridge-tailed monitor).